A 554-amino-acid polypeptide reads, in one-letter code: MMLSRAKPAVGRGVQHTDKRKKKGRKIPKLEELLSKRDFTGAITLLEFKRHVGEEEEDTNLWIGYCAFHLGDYKRALEEYENATKEENCNSEVWVNLACTYFFLGMYKQAEAAGFKASKSRLQNRLLFHLAHKFNDEKKLMSFHQNLQDVTEDQLSLASIHYMRSHYQEAIDIYKRILLDNREYLALNVYVALCYYKLDYYDVSQEVLAVYLQQIPDSTIALNLKACNHFRLYNGRAAEAELKSLMDNASSSFEFAKELIRHNLVVFRGGEGALQVLPPLVDVIPEARLNLVIYYLRQDDVQEAYNLIKDLEPTTPQEYILKGVVNAALGQEMGSRDHMKIAQQFFQLVGGSASECDTIPGRQCMASCFFLLKQFDDVLIYLNSFKSYFYNDDIFNFNYAQAKAATGNTSEGEEAFLLIQSEKMKNDYIYLSWLARCYIMNKKPRLAWELYLKMETSGESFSLLQLIANDCYKMGQFYYSAKAFDVLERLDPNPEYWEGKRGACVGIFQMIIAGREPKETLREVLHLLRSTGNTQVEYMIRIMKKWAKENRVSI.

The disordered stretch occupies residues 1 to 24; sequence MMLSRAKPAVGRGVQHTDKRKKKG. TPR repeat units lie at residues 57–90, 92–125, 151–184, and 468–501; these read EDTN…ENCN, EVWV…LQNR, TEDQ…NREY, and ANDC…EGKR.

Belongs to the IFT56 family. Component of the IFT complex B. Interacts with IFT46; the interaction is direct.

The protein localises to the cell projection. It localises to the cilium. Functionally, component of the intraflagellar transport (IFT) complex B required for transport of proteins in the motile cilium. Required for transport of specific ciliary cargo proteins related to motility, while it is neither required for IFT complex B assembly or motion nor for cilium assembly. Required for efficient coupling between the accumulation of GLI2 and GLI3 at the ciliary tips and their dissociation from the negative regulator SUFU. Plays a key role in maintaining the integrity of the IFT complex B and the proper ciliary localization of the IFT complex B components. Not required for IFT complex A ciliary localization or function. Essential for maintaining proper microtubule organization within the ciliary axoneme. The sequence is that of Intraflagellar transport protein 56 from Homo sapiens (Human).